The primary structure comprises 458 residues: ATP synthase subunit beta (458 aa).

148 to 155 (GGAGVGKT) contacts ATP.

This sequence belongs to the ATPase alpha/beta chains family. In terms of assembly, F-type ATPases have 2 components, CF(1) - the catalytic core - and CF(0) - the membrane proton channel. CF(1) has five subunits: alpha(3), beta(3), gamma(1), delta(1), epsilon(1). CF(0) has three main subunits: a(1), b(2) and c(9-12). The alpha and beta chains form an alternating ring which encloses part of the gamma chain. CF(1) is attached to CF(0) by a central stalk formed by the gamma and epsilon chains, while a peripheral stalk is formed by the delta and b chains.

It localises to the cell inner membrane. It catalyses the reaction ATP + H2O + 4 H(+)(in) = ADP + phosphate + 5 H(+)(out). Its function is as follows. Produces ATP from ADP in the presence of a proton gradient across the membrane. The catalytic sites are hosted primarily by the beta subunits. This Shewanella pealeana (strain ATCC 700345 / ANG-SQ1) protein is ATP synthase subunit beta.